We begin with the raw amino-acid sequence, 576 residues long: Non-neuronal cytoplasmic intermediate filament protein (576 aa).

A disordered region spans residues 1–51 (MTSKISTTYEEEGRQSKIQPRAFVITRSGPSSKSSSFSARQSYASSRQSIT). The segment at 2–75 (TSKISTTYEE…FRGTREKEKR (74 aa)) is head. Residues 28 to 49 (SGPSSKSSSFSARQSYASSRQS) show a composition bias toward low complexity. Residues 73-425 (EKREMQNLNE…KLLEGEESRV (353 aa)) enclose the IF rod domain. The tract at residues 76–108 (EMQNLNERLASYIEKVHFLDAQVKKLEAENEAL) is coil 1A. The segment at 109 to 122 (RNRKSESLQPIRDA) is linker 1. Residues 123 to 260 (YENELAQARK…DLLDQLELLK (138 aa)) are coil 1B. Residues 261-278 (PEPIQIKGMDYAEFWKSE) are linker 2. Positions 279–425 (LSKCVREIQS…KLLEGEESRV (147 aa)) are coil 2. A tail region spans residues 426 to 576 (GLRSLVEQAI…KATLIAKFSG (151 aa)). An LTD domain is found at 456 to 574 (GSMTIQRSSK…NEKATLIAKF (119 aa)).

It belongs to the intermediate filament family. In terms of assembly, can form homopolymers.

The protein localises to the cytoplasm. The sequence is that of Non-neuronal cytoplasmic intermediate filament protein from Cornu aspersum (Brown garden snail).